Here is a 398-residue protein sequence, read N- to C-terminus: MAKLTVKDVDLKGKKVLVRVDFNVPVKDGVITNDNRITAALPTIKYIIEHGGRAVLFSHLGRVKEEADKKGKSLAPVAADLAKKLVQEVVFPGVTRGEQLEAAINALKNGEVLLVENTRFEDVDGKKESKNDPELGKYWASLGDGIFVNDAFGTAHRAHASNVGISANVDKAVAGFLLENEIAYIQEAVDNPVRPFIAILGGSKVSDKIGVIENLLKKADKVLIGGGMTYTFLKAQGIEIGDSLVEEDKLDIAKDLLAKANGKLILPVDSKEANAFADYTEVKDTEGAAVDPGFLGLDIGPKSIAKFDDELTGAKTVVWNGPMGVFENPDFQAGTIGVMDAIVKQPGVKSIIGGGDSAAAAINLGRADKFSWISTGGGASMELLEGKVLPGLAALTEK.

Residues 21–23 (DFN), arginine 36, 59–62 (HLGR), arginine 119, and arginine 157 each bind substrate. ATP is bound by residues lysine 208, glycine 296, glutamate 327, and 354–357 (GGDS).

It belongs to the phosphoglycerate kinase family. In terms of assembly, monomer.

The protein localises to the cytoplasm. It carries out the reaction (2R)-3-phosphoglycerate + ATP = (2R)-3-phospho-glyceroyl phosphate + ADP. Its pathway is carbohydrate degradation; glycolysis; pyruvate from D-glyceraldehyde 3-phosphate: step 2/5. The sequence is that of Phosphoglycerate kinase from Streptococcus mutans serotype c (strain ATCC 700610 / UA159).